A 38-amino-acid chain; its full sequence is Histatin-1 (38 aa).

Residues 1-38 (DSHEERHHGRHGHHKYGRKFHEKHHSHRGYRSNYLYDN) are disordered. Phosphoserine is present on Ser-2. Residues 8 to 30 (HGRHGHHKYGRKFHEKHHSHRGY) show a composition bias toward basic residues.

It belongs to the histatin/statherin family.

The protein localises to the secreted. Functionally, histatins (Hsts) are cationic and histidine-rich secreted peptides mainly synthesized by saliva glands of humans and higher primates. Hsts are considered to be major precursors of the protective proteinaceous structure on tooth surfaces (enamel pellicle). The sequence is that of Histatin-1 (HTN1) from Macaca fascicularis (Crab-eating macaque).